The primary structure comprises 325 residues: Hydroxymethylglutaryl-CoA lyase, mitochondrial (325 aa).

The transit peptide at 1 to 27 (MATVRKAFPQRLVGLASLRAASTSSMG) directs the protein to the mitochondrion. The Pyruvate carboxyltransferase domain occupies 33-300 (VKIVEVGPRD…HTGVNLQKLL (268 aa)). R41 serves as a coordination point for substrate. D42 serves as a coordination point for a divalent metal cation. Residue K48 is modified to N6-acetyllysine; alternate. An N6-succinyllysine; alternate modification is found at K48. K111 carries the post-translational modification N6-acetyllysine. Residues K137 and K179 each carry the N6-acetyllysine; alternate modification. An N6-succinyllysine; alternate mark is found at K137 and K179. Residues H233 and H235 each coordinate a divalent metal cation. The active site involves C266. N275 provides a ligand contact to a divalent metal cation. Positions 323-325 (CKL) match the Microbody targeting signal motif. K324 carries the N6-acetyllysine modification.

Belongs to the HMG-CoA lyase family. Homodimer; disulfide-linked. Can also form homotetramers. As to expression, in suckling rat, highest levels in liver and in intestine. Lower levels in heart, kidney and cerebellum. Weak expression in brain cortex, medulla and midbrain. Levels decrease slightly during weaning.

It localises to the mitochondrion matrix. The protein localises to the peroxisome. It carries out the reaction (3S)-3-hydroxy-3-methylglutaryl-CoA = acetoacetate + acetyl-CoA. It functions in the pathway metabolic intermediate metabolism; (S)-3-hydroxy-3-methylglutaryl-CoA degradation; acetoacetate from (S)-3-hydroxy-3-methylglutaryl-CoA: step 1/1. In terms of biological role, mitochondrial 3-hydroxy-3-methylglutaryl-CoA lyase that catalyzes a cation-dependent cleavage of (S)-3-hydroxy-3-methylglutaryl-CoA into acetyl-CoA and acetoacetate, a key step in ketogenesis. Terminal step in leucine catabolism. Ketone bodies (beta-hydroxybutyrate, acetoacetate and acetone) are essential as an alternative source of energy to glucose, as lipid precursors and as regulators of metabolism. The polypeptide is Hydroxymethylglutaryl-CoA lyase, mitochondrial (Hmgcl) (Rattus norvegicus (Rat)).